A 288-amino-acid chain; its full sequence is Pyridoxal kinase PdxY (288 aa).

Substrate-binding positions include S12 and 47–48 (TQ). ATP-binding positions include D114, E151, K184, and 211–214 (RPLL). D225 contributes to the substrate binding site.

The protein belongs to the pyridoxine kinase family. PdxY subfamily. As to quaternary structure, homodimer. The cofactor is Mg(2+).

It catalyses the reaction pyridoxal + ATP = pyridoxal 5'-phosphate + ADP + H(+). The protein operates within cofactor metabolism; pyridoxal 5'-phosphate salvage; pyridoxal 5'-phosphate from pyridoxal: step 1/1. Functionally, pyridoxal kinase involved in the salvage pathway of pyridoxal 5'-phosphate (PLP). Catalyzes the phosphorylation of pyridoxal to PLP. The chain is Pyridoxal kinase PdxY from Pseudomonas syringae pv. tomato (strain ATCC BAA-871 / DC3000).